We begin with the raw amino-acid sequence, 412 residues long: cAMP-dependent protein kinase regulatory subunit (412 aa).

Over residues 1–11 (MSNYSHSSNNP) the composition is skewed to polar residues. A disordered region spans residues 1-146 (MSNYSHSSNN…TPPSHPKSEE (146 aa)). Positions 16–29 (STKEDKPSSFHKIA) are enriched in basic and acidic residues. The tract at residues 23 to 159 (SSFHKIAEDE…RLKTAVSNNF (137 aa)) is dimerization and phosphorylation. 2 stretches are compositionally biased toward polar residues: residues 49–60 (NADNSAGGNNPL) and 119–138 (TSVSAESLNPTSAGSDSWTP). Ser-120 carries the phosphoserine modification. 3',5'-cyclic AMP contacts are provided by residues 160-291 (LFSH…EEVP), Glu-238, Arg-247, 292-405 (LLSS…TEYS), Glu-359, and Arg-368.

The protein belongs to the cAMP-dependent kinase regulatory chain family. In terms of assembly, tetramer, composed of 2 regulatory (R) and 2 catalytic (C) subunits. In the presence of cAMP it dissociates into 2 active monomeric C subunits and an R dimer.

In Emericella nidulans (strain FGSC A4 / ATCC 38163 / CBS 112.46 / NRRL 194 / M139) (Aspergillus nidulans), this protein is cAMP-dependent protein kinase regulatory subunit (pkaR).